The sequence spans 278 residues: Large ribosomal subunit protein uL2 (278 aa).

Residues 212–221 (NRWLGKRPHN) are compositionally biased toward basic residues. Residues 212 to 278 (NRWLGKRPHN…ILSSRHNRKK (67 aa)) form a disordered region.

This sequence belongs to the universal ribosomal protein uL2 family. In terms of assembly, part of the 50S ribosomal subunit. Forms a bridge to the 30S subunit in the 70S ribosome.

Functionally, one of the primary rRNA binding proteins. Required for association of the 30S and 50S subunits to form the 70S ribosome, for tRNA binding and peptide bond formation. It has been suggested to have peptidyltransferase activity; this is somewhat controversial. Makes several contacts with the 16S rRNA in the 70S ribosome. This Methylorubrum populi (strain ATCC BAA-705 / NCIMB 13946 / BJ001) (Methylobacterium populi) protein is Large ribosomal subunit protein uL2.